The following is a 264-amino-acid chain: Glycerol uptake facilitator protein (264 aa).

Over M1–K3 the chain is Cytoplasmic. Residues S4–V32 form a helical membrane-spanning segment. At A33–F37 the chain is on the periplasmic side. A helical transmembrane segment spans residues G38–A58. Topologically, residues G59–S61 are cytoplasmic. Residues G62–L65 lie within the membrane without spanning it. The NPA 1 signature appears at N66–A68. The segment at residues N66 to F76 is an intramembrane region (helical). Topologically, residues A77–K82 are cytoplasmic. The chain crosses the membrane as a helical span at residues K83–Y106. Residues R107–L141 lie on the Periplasmic side of the membrane. Residues S142 to D167 form a helical membrane-spanning segment. At G168–P175 the chain is on the cytoplasmic side. Residues L176–M192 form a helical membrane-spanning segment. Residues G193–T196 lie on the Periplasmic side of the membrane. The stretch at G197–M200 is an intramembrane region. Residues N201–A203 carry the NPA 2 motif. Positions N201–L214 form an intramembrane region, helical. Residues A215–P229 are Periplasmic-facing. The chain crosses the membrane as a helical span at residues Y230–A252. The Cytoplasmic portion of the chain corresponds to I253–E264.

This sequence belongs to the MIP/aquaporin (TC 1.A.8) family.

Its subcellular location is the cell inner membrane. The enzyme catalyses glycerol(in) = glycerol(out). In terms of biological role, mediates glycerol diffusion across the cytoplasmic membrane via a pore-type mechanism. This Haemophilus influenzae (strain ATCC 51907 / DSM 11121 / KW20 / Rd) protein is Glycerol uptake facilitator protein (glpF).